The sequence spans 338 residues: Ketol-acid reductoisomerase (NADP(+)) (338 aa).

A KARI N-terminal Rossmann domain is found at 1 to 181; that stretch reads MKVYYDKDAD…GGTKGGVIET (181 aa). NADP(+) contacts are provided by residues 24-27, R47, S52, and 82-85; these read YGSQ and DETQ. Residue H107 is part of the active site. G133 lines the NADP(+) pocket. The KARI C-terminal knotted domain occupies 182–327; that stretch reads SFREETETDL…AELRAMMPWI (146 aa). Positions 190, 194, 226, and 230 each coordinate Mg(2+). S251 provides a ligand contact to substrate.

The protein belongs to the ketol-acid reductoisomerase family. Mg(2+) is required as a cofactor.

The enzyme catalyses (2R)-2,3-dihydroxy-3-methylbutanoate + NADP(+) = (2S)-2-acetolactate + NADPH + H(+). The catalysed reaction is (2R,3R)-2,3-dihydroxy-3-methylpentanoate + NADP(+) = (S)-2-ethyl-2-hydroxy-3-oxobutanoate + NADPH + H(+). The protein operates within amino-acid biosynthesis; L-isoleucine biosynthesis; L-isoleucine from 2-oxobutanoate: step 2/4. Its pathway is amino-acid biosynthesis; L-valine biosynthesis; L-valine from pyruvate: step 2/4. Involved in the biosynthesis of branched-chain amino acids (BCAA). Catalyzes an alkyl-migration followed by a ketol-acid reduction of (S)-2-acetolactate (S2AL) to yield (R)-2,3-dihydroxy-isovalerate. In the isomerase reaction, S2AL is rearranged via a Mg-dependent methyl migration to produce 3-hydroxy-3-methyl-2-ketobutyrate (HMKB). In the reductase reaction, this 2-ketoacid undergoes a metal-dependent reduction by NADPH to yield (R)-2,3-dihydroxy-isovalerate. This Laribacter hongkongensis (strain HLHK9) protein is Ketol-acid reductoisomerase (NADP(+)).